We begin with the raw amino-acid sequence, 354 residues long: S-adenosylmethionine:tRNA ribosyltransferase-isomerase (354 aa).

This sequence belongs to the QueA family. In terms of assembly, monomer.

The protein localises to the cytoplasm. The enzyme catalyses 7-aminomethyl-7-carbaguanosine(34) in tRNA + S-adenosyl-L-methionine = epoxyqueuosine(34) in tRNA + adenine + L-methionine + 2 H(+). It participates in tRNA modification; tRNA-queuosine biosynthesis. In terms of biological role, transfers and isomerizes the ribose moiety from AdoMet to the 7-aminomethyl group of 7-deazaguanine (preQ1-tRNA) to give epoxyqueuosine (oQ-tRNA). The protein is S-adenosylmethionine:tRNA ribosyltransferase-isomerase of Azorhizobium caulinodans (strain ATCC 43989 / DSM 5975 / JCM 20966 / LMG 6465 / NBRC 14845 / NCIMB 13405 / ORS 571).